A 223-amino-acid chain; its full sequence is Deoxyribose-phosphate aldolase (223 aa).

Asp-91 serves as the catalytic Proton donor/acceptor. Lys-154 functions as the Schiff-base intermediate with acetaldehyde in the catalytic mechanism. The Proton donor/acceptor role is filled by Lys-183.

This sequence belongs to the DeoC/FbaB aldolase family. DeoC type 1 subfamily.

The protein localises to the cytoplasm. The enzyme catalyses 2-deoxy-D-ribose 5-phosphate = D-glyceraldehyde 3-phosphate + acetaldehyde. Its pathway is carbohydrate degradation; 2-deoxy-D-ribose 1-phosphate degradation; D-glyceraldehyde 3-phosphate and acetaldehyde from 2-deoxy-alpha-D-ribose 1-phosphate: step 2/2. Its function is as follows. Catalyzes a reversible aldol reaction between acetaldehyde and D-glyceraldehyde 3-phosphate to generate 2-deoxy-D-ribose 5-phosphate. This Geobacillus kaustophilus (strain HTA426) protein is Deoxyribose-phosphate aldolase.